Consider the following 427-residue polypeptide: Serine--tRNA ligase (427 aa).

235–237 (TAE) contributes to the L-serine binding site. ATP is bound by residues 266 to 268 (RRE) and Val282. Glu289 is an L-serine binding site. 353–356 (EASS) lines the ATP pocket. Ser389 lines the L-serine pocket.

It belongs to the class-II aminoacyl-tRNA synthetase family. Type-1 seryl-tRNA synthetase subfamily. As to quaternary structure, homodimer. The tRNA molecule binds across the dimer.

The protein resides in the cytoplasm. The catalysed reaction is tRNA(Ser) + L-serine + ATP = L-seryl-tRNA(Ser) + AMP + diphosphate + H(+). It catalyses the reaction tRNA(Sec) + L-serine + ATP = L-seryl-tRNA(Sec) + AMP + diphosphate + H(+). The protein operates within aminoacyl-tRNA biosynthesis; selenocysteinyl-tRNA(Sec) biosynthesis; L-seryl-tRNA(Sec) from L-serine and tRNA(Sec): step 1/1. Its function is as follows. Catalyzes the attachment of serine to tRNA(Ser). Is also able to aminoacylate tRNA(Sec) with serine, to form the misacylated tRNA L-seryl-tRNA(Sec), which will be further converted into selenocysteinyl-tRNA(Sec). The polypeptide is Serine--tRNA ligase (Chlorobium phaeobacteroides (strain BS1)).